The sequence spans 360 residues: MKALILVGGYGTRLRPLTLSVPKPLVDFCNKPILLHQVEALVKAGVTHVILAVSYMSDMLEKEMKEQEKRLGIRISMSHEKEPLGTAGPLALARELLTENSEPFFVLNSDVICDFPFEDMVRFHKHHGKEGTIVVTKVEEPSKYGVVIYEAESGRIQRFVEKPQVFVSNKINSGLYIFSPAVLDRIQLRPTSIEKEIFPVMAQEGQLFALELQGFWMDIGQPKDFLTGMCMYLQSVRHKHPERLHVGPGFTGNVLVDPTAKIGQNCSIGPNVTIGPGVTVEDGVRIKRCSIMKGSRLHSHSWLQSSIVGWSSSVGQWVRMENVTVLGEDVIVNDELYLNGANVLPHKCISESVPEPRIIM.

This sequence belongs to the transferase hexapeptide repeat family.

It carries out the reaction alpha-D-mannose 1-phosphate + GTP + H(+) = GDP-alpha-D-mannose + diphosphate. It functions in the pathway nucleotide-sugar biosynthesis; GDP-alpha-D-mannose biosynthesis; GDP-alpha-D-mannose from alpha-D-mannose 1-phosphate (GTP route): step 1/1. Functionally, catalyzes the formation of GDP-mannose, an essential precursor of glycan moieties of glycoproteins and glycolipids. In Xenopus laevis (African clawed frog), this protein is Mannose-1-phosphate guanyltransferase beta-B (gmppb-b).